The primary structure comprises 274 residues: uncharacterized protein (274 aa).

This is an uncharacterized protein from Methanocaldococcus jannaschii (strain ATCC 43067 / DSM 2661 / JAL-1 / JCM 10045 / NBRC 100440) (Methanococcus jannaschii).